The primary structure comprises 216 residues: Cytochrome c biogenesis ATP-binding export protein CcmA (216 aa).

The 206-residue stretch at 11–216 (VSASKLTCIR…RKIRLDYRFV (206 aa)) folds into the ABC transporter domain. Position 43 to 50 (43 to 50 (GPNGAGKT)) interacts with ATP.

Belongs to the ABC transporter superfamily. CcmA exporter (TC 3.A.1.107) family. The complex is composed of two ATP-binding proteins (CcmA) and two transmembrane proteins (CcmB).

It is found in the cell inner membrane. It carries out the reaction heme b(in) + ATP + H2O = heme b(out) + ADP + phosphate + H(+). In terms of biological role, part of the ABC transporter complex CcmAB involved in the biogenesis of c-type cytochromes; once thought to export heme, this seems not to be the case, but its exact role is uncertain. Responsible for energy coupling to the transport system. This chain is Cytochrome c biogenesis ATP-binding export protein CcmA, found in Shewanella sp. (strain MR-4).